The primary structure comprises 62 residues: Large ribosomal subunit protein bL28 (62 aa).

Belongs to the bacterial ribosomal protein bL28 family.

This Frankia casuarinae (strain DSM 45818 / CECT 9043 / HFP020203 / CcI3) protein is Large ribosomal subunit protein bL28.